The sequence spans 297 residues: ClpXP adapter protein SpxH (297 aa).

This sequence belongs to the SpxH family. Interacts with Spx.

The protein resides in the cytoplasm. Its function is as follows. Adapter protein required for efficient degradation of Spx by ClpXP under non-stress conditions. Interaction with Spx stabilizes Spx and exposes the C-terminus of Spx for recognition and proteolysis by ClpXP. The polypeptide is ClpXP adapter protein SpxH (Bacillus cereus (strain ATCC 10987 / NRS 248)).